The primary structure comprises 392 residues: Branched-chain-amino-acid aminotransferase, mitochondrial (392 aa).

A mitochondrion-targeting transit peptide spans 1 to 27 (MAAAALGQIWARKFLSVPWLLCGPRRY). Tyr-168 serves as a coordination point for substrate. Lys-229 carries the post-translational modification N6-(pyridoxal phosphate)lysine. The residue at position 321 (Lys-321) is an N6-acetyllysine.

Belongs to the class-IV pyridoxal-phosphate-dependent aminotransferase family. As to quaternary structure, homodimer. Pyridoxal 5'-phosphate is required as a cofactor.

It localises to the mitochondrion. The enzyme catalyses L-leucine + 2-oxoglutarate = 4-methyl-2-oxopentanoate + L-glutamate. The catalysed reaction is L-isoleucine + 2-oxoglutarate = (S)-3-methyl-2-oxopentanoate + L-glutamate. It carries out the reaction L-valine + 2-oxoglutarate = 3-methyl-2-oxobutanoate + L-glutamate. In terms of biological role, catalyzes the first reaction in the catabolism of the essential branched chain amino acids leucine, isoleucine, and valine. May also function as a transporter of branched chain alpha-keto acids. This chain is Branched-chain-amino-acid aminotransferase, mitochondrial (BCAT2), found in Pongo abelii (Sumatran orangutan).